Here is a 226-residue protein sequence, read N- to C-terminus: Ribonuclease HII (226 aa).

One can recognise an RNase H type-2 domain in the interval 29 to 220 (GPVAGVDEAG…VAALLHRVDN (192 aa)). Residues Asp35, Glu36, and Asp129 each coordinate a divalent metal cation.

It belongs to the RNase HII family. The cofactor is Mn(2+). Requires Mg(2+) as cofactor.

The protein localises to the cytoplasm. The catalysed reaction is Endonucleolytic cleavage to 5'-phosphomonoester.. In terms of biological role, endonuclease that specifically degrades the RNA of RNA-DNA hybrids. The chain is Ribonuclease HII from Rhodococcus opacus (strain B4).